A 292-amino-acid chain; its full sequence is Ribosomal RNA small subunit methyltransferase A (292 aa).

S-adenosyl-L-methionine contacts are provided by Asn29, Leu31, Gly56, Glu77, Asp102, and Asn127.

It belongs to the class I-like SAM-binding methyltransferase superfamily. rRNA adenine N(6)-methyltransferase family. RsmA subfamily.

It localises to the cytoplasm. The enzyme catalyses adenosine(1518)/adenosine(1519) in 16S rRNA + 4 S-adenosyl-L-methionine = N(6)-dimethyladenosine(1518)/N(6)-dimethyladenosine(1519) in 16S rRNA + 4 S-adenosyl-L-homocysteine + 4 H(+). Its function is as follows. Specifically dimethylates two adjacent adenosines (A1518 and A1519) in the loop of a conserved hairpin near the 3'-end of 16S rRNA in the 30S particle. May play a critical role in biogenesis of 30S subunits. This is Ribosomal RNA small subunit methyltransferase A from Bacillus pumilus (strain SAFR-032).